Consider the following 482-residue polypeptide: Catalase (482 aa).

Positions 1–11 (MNAMTNKTLTT) are enriched in polar residues. The interval 1-21 (MNAMTNKTLTTAAGAPVADNN) is disordered. Residues H57 and N130 contribute to the active site. Y340 provides a ligand contact to heme.

Belongs to the catalase family. Homodimer. Requires heme as cofactor.

It catalyses the reaction 2 H2O2 = O2 + 2 H2O. Decomposes hydrogen peroxide into water and oxygen; serves to protect cells from the toxic effects of hydrogen peroxide. In Bordetella bronchiseptica (strain ATCC BAA-588 / NCTC 13252 / RB50) (Alcaligenes bronchisepticus), this protein is Catalase (katA).